Here is a 101-residue protein sequence, read N- to C-terminus: Urease subunit beta (101 aa).

It belongs to the urease beta subunit family. Heterotrimer of UreA (gamma), UreB (beta) and UreC (alpha) subunits. Three heterotrimers associate to form the active enzyme.

It localises to the cytoplasm. It catalyses the reaction urea + 2 H2O + H(+) = hydrogencarbonate + 2 NH4(+). It functions in the pathway nitrogen metabolism; urea degradation; CO(2) and NH(3) from urea (urease route): step 1/1. This is Urease subunit beta from Rhodopseudomonas palustris (strain ATCC BAA-98 / CGA009).